Reading from the N-terminus, the 120-residue chain is Ribonuclease P protein component (120 aa).

Belongs to the RnpA family. As to quaternary structure, consists of a catalytic RNA component (M1 or rnpB) and a protein subunit.

The catalysed reaction is Endonucleolytic cleavage of RNA, removing 5'-extranucleotides from tRNA precursor.. Its function is as follows. RNaseP catalyzes the removal of the 5'-leader sequence from pre-tRNA to produce the mature 5'-terminus. It can also cleave other RNA substrates such as 4.5S RNA. The protein component plays an auxiliary but essential role in vivo by binding to the 5'-leader sequence and broadening the substrate specificity of the ribozyme. The sequence is that of Ribonuclease P protein component from Acidothermus cellulolyticus (strain ATCC 43068 / DSM 8971 / 11B).